The chain runs to 374 residues: Agmatine deiminase (374 aa).

Agmatine is bound by residues D220 and D226. The active-site Amidino-cysteine intermediate is the C366.

It belongs to the agmatine deiminase family. In terms of assembly, forms homodimers.

It catalyses the reaction agmatine + H2O = N-carbamoylputrescine + NH4(+). It participates in amine and polyamine biosynthesis; putrescine biosynthesis via agmatine pathway; N-carbamoylputrescine from agmatine: step 1/1. Its function is as follows. Mediates the hydrolysis of agmatine into N-carbamoylputrescine in the arginine decarboxylase (ADC) pathway of putrescine biosynthesis, a basic polyamine. This is Agmatine deiminase from Medicago truncatula (Barrel medic).